Consider the following 514-residue polypeptide: RNA polymerase sigma factor SigA (514 aa).

Positions 135–159 are enriched in basic residues; the sequence is AAKKATAKKAAAKKTTAKKTAAKKS. The disordered stretch occupies residues 135–205; it reads AAKKATAKKA…SDDDEDDAPA (71 aa). The tract at residues 281–351 is sigma-70 factor domain-2; sequence LLEANLRLVV…TRAMADQART (71 aa). An Interaction with polymerase core subunit RpoC motif is present at residues 305 to 308; sequence DLIQ. Residues 360–436 form a sigma-70 factor domain-3 region; that stretch reads EVINKLARVQ…DSEAVVPADA (77 aa). Residues 449-502 form a sigma-70 factor domain-4 region; sequence VLDTLSEREAGVVSMRFGLTDGQPKTLDEIGKVYGVTRERIRQIESKTMSKLRH. The segment at residues 475-494 is a DNA-binding region (H-T-H motif); the sequence is LDEIGKVYGVTRERIRQIES.

It belongs to the sigma-70 factor family. RpoD/SigA subfamily. Interacts transiently with the RNA polymerase catalytic core.

It is found in the cytoplasm. Its function is as follows. Sigma factors are initiation factors that promote the attachment of RNA polymerase to specific initiation sites and are then released. This sigma factor is the primary sigma factor during exponential growth. The polypeptide is RNA polymerase sigma factor SigA (Streptomyces griseus).